The chain runs to 705 residues: MKKYLAITSKGLENLLADELIALGVTDPKVVHAGVKFEAPIEVVYRCCLWSRIASRFIQILSEFDVRDDMDLYLGASSINWPSYFSADKTLVVDFNGTNREIRNSQYGALKVKDAIVDRFTKADLPRPNISKVEPDLRVHMRLSGEKGILGFDLVGSGLHQRGYRTEAGRAPLRETLAAALVMRSTWDESKPLLDPMCGSGTLLIEAALMACEMAPGVKREKWCFEALNDFDAELWAEIRSEARVKSRRGVKKVDARFYGFDRDYRVIQTARENARRAGVEDLITFDVGDATKVERPEGFENGVILCNPPYGERLSTEPALIALYSEFGRQLKEVFGGCTASIYSSNDDLLACLRMRADKQFKLNNGALPCVQKNYSITESAERKEAVSVEVAPEFMNRLKKNIGKIGKWARKEKLDCYRIYDADLPDYNAAIDVYKDYIIIQEYAAPKTISEDKARRRLTDMIRATVLVTGVETNNVILKVRQKQSGKNQYQKLAEKSRYFDVEEYGVKLIVNLQDYLDTGLFLDHKLTRKMLGEMAAGKDFLNLFAYTGSATVHAACGGAKSTMTIDMSRTYLEWAQKNMNTNGQTGTQHQFLQADCLQWLQQADGEFDLIFIDPPTFSNSKRMEQTFDVQRDHIMLLENLKRMLRENGTIVFSNNKRNFKMDDAALEKAGLKAKNISKQTLPLDFARNKHIHNCWIITHKED.

The THUMP domain maps to 43–154; that stretch reads VVYRCCLWSR…GEKGILGFDL (112 aa).

The protein belongs to the methyltransferase superfamily. RlmKL family.

The protein localises to the cytoplasm. It carries out the reaction guanosine(2445) in 23S rRNA + S-adenosyl-L-methionine = N(2)-methylguanosine(2445) in 23S rRNA + S-adenosyl-L-homocysteine + H(+). It catalyses the reaction guanosine(2069) in 23S rRNA + S-adenosyl-L-methionine = N(2)-methylguanosine(2069) in 23S rRNA + S-adenosyl-L-homocysteine + H(+). Functionally, specifically methylates the guanine in position 2445 (m2G2445) and the guanine in position 2069 (m7G2069) of 23S rRNA. This is Ribosomal RNA large subunit methyltransferase K/L from Aliivibrio fischeri (strain MJ11) (Vibrio fischeri).